Reading from the N-terminus, the 261-residue chain is Ribonuclease HII (261 aa).

Over residues 1–20 the composition is skewed to basic and acidic residues; that stretch reads MIRDKSAKRPAKDAPKKAAV. The disordered stretch occupies residues 1–23; it reads MIRDKSAKRPAKDAPKKAAVKEA. Positions 42 to 230 constitute an RNase H type-2 domain; it reads WPVAGCDEAG…VAAARAKHMP (189 aa). The a divalent metal cation site is built by Asp-48, Glu-49, and Asp-139.

Belongs to the RNase HII family. The cofactor is Mn(2+). Requires Mg(2+) as cofactor.

Its subcellular location is the cytoplasm. The enzyme catalyses Endonucleolytic cleavage to 5'-phosphomonoester.. In terms of biological role, endonuclease that specifically degrades the RNA of RNA-DNA hybrids. The polypeptide is Ribonuclease HII (Bradyrhizobium diazoefficiens (strain JCM 10833 / BCRC 13528 / IAM 13628 / NBRC 14792 / USDA 110)).